We begin with the raw amino-acid sequence, 284 residues long: HTH-type transcriptional activator RhaR (284 aa).

The HTH araC/xylS-type domain maps to 181–279 (DMLMNALRAS…GVSPSAYRQR (99 aa)). DNA-binding regions (H-T-H motif) lie at residues 198–219 (EAFCEQHHFSARSLRSRFKEQT) and 246–269 (IGDVAALCGFEDSNYFSVVFHQAF).

As to quaternary structure, binds DNA as a dimer.

It is found in the cytoplasm. Activates expression of the rhaSR operon in response to L-rhamnose. This is HTH-type transcriptional activator RhaR from Pectobacterium atrosepticum (strain SCRI 1043 / ATCC BAA-672) (Erwinia carotovora subsp. atroseptica).